The following is a 166-amino-acid chain: Transcriptional repressor NrdR (166 aa).

A zinc finger lies at 3 to 34 (CPHCHHNGSRVVDSRPTDDGRVIRRRRECESC). The region spanning 49–139 (LLVIKKNGTR…VYRQFKDTGV (91 aa)) is the ATP-cone domain.

This sequence belongs to the NrdR family. Zn(2+) is required as a cofactor.

Its function is as follows. Negatively regulates transcription of bacterial ribonucleotide reductase nrd genes and operons by binding to NrdR-boxes. This Levilactobacillus brevis (strain ATCC 367 / BCRC 12310 / CIP 105137 / JCM 1170 / LMG 11437 / NCIMB 947 / NCTC 947) (Lactobacillus brevis) protein is Transcriptional repressor NrdR.